The primary structure comprises 124 residues: MATVNQLVRKPRAPKVDKTNVPALNACPQKRGVCTRVYTTTPKKPNSALRKVARVRLTNGFEVTSYIGGEGHNLQEHSVILIRGGRVKDLPGVRYHTVRGALDCAGVNTRRQGRSKYGAKRPKS.

The residue at position 89 (D89) is a 3-methylthioaspartic acid.

The protein belongs to the universal ribosomal protein uS12 family. In terms of assembly, part of the 30S ribosomal subunit. Contacts proteins S8 and S17. May interact with IF1 in the 30S initiation complex.

Its function is as follows. With S4 and S5 plays an important role in translational accuracy. In terms of biological role, interacts with and stabilizes bases of the 16S rRNA that are involved in tRNA selection in the A site and with the mRNA backbone. Located at the interface of the 30S and 50S subunits, it traverses the body of the 30S subunit contacting proteins on the other side and probably holding the rRNA structure together. The combined cluster of proteins S8, S12 and S17 appears to hold together the shoulder and platform of the 30S subunit. This Shewanella sp. (strain ANA-3) protein is Small ribosomal subunit protein uS12.